The following is a 494-amino-acid chain: Acetylcholine receptor subunit epsilon (494 aa).

A signal peptide spans 1 to 20; sequence MTMALLGTLLLLALFGRSQG. Residues 21–239 lie on the Extracellular side of the membrane; the sequence is KNEELSLYHH…VIYTLIIRRK (219 aa). Residues asparagine 86 and asparagine 161 are each glycosylated (N-linked (GlcNAc...) asparagine). Cysteine 148 and cysteine 162 form a disulfide bridge. Residues 240–264 form a helical membrane-spanning segment; it reads PLFYVINIIVPCVLISGLVLLAYFL. Topologically, residues 265-272 are cytoplasmic; that stretch reads PAQAGGQK. The helical transmembrane segment at 273 to 291 threads the bilayer; the sequence is CTVSINVLLAQTVFLFLIA. The Extracellular portion of the chain corresponds to 292 to 306; sequence QKIPETSLSVPLLGR. Residues 307 to 328 form a helical membrane-spanning segment; sequence YLIFVMVVATLIVMNCVIVLNV. Topologically, residues 329–457 are cytoplasmic; the sequence is SLRTPTTHAT…WVRMGKALDN (129 aa). The chain crosses the membrane as a helical span at residues 458 to 481; sequence VCFWAALVLFSVGSTLIFLGGYFN. Residues 482-494 lie on the Extracellular side of the membrane; it reads QVPDLPYPPCIQP.

It belongs to the ligand-gated ion channel (TC 1.A.9) family. Acetylcholine receptor (TC 1.A.9.1) subfamily. Epsilon/CHRNE sub-subfamily. As to quaternary structure, pentamer of two alpha chains, and one each of the beta, delta, and gamma (in immature muscle) or epsilon (in mature muscle) chains. The muscle heteropentamer composed of alpha-1, beta-1, delta, epsilon subunits interacts with the alpha-conotoxin ImII.

The protein resides in the postsynaptic cell membrane. It localises to the cell membrane. It catalyses the reaction K(+)(in) = K(+)(out). The catalysed reaction is Na(+)(in) = Na(+)(out). After binding acetylcholine, the AChR responds by an extensive change in conformation that affects all subunits and leads to opening of an ion-conducting channel across the plasma membrane. This chain is Acetylcholine receptor subunit epsilon (Chrne), found in Rattus norvegicus (Rat).